The primary structure comprises 425 residues: tRNA(Ile)-lysidine synthase (425 aa).

27–32 is an ATP binding site; it reads SGGLDS.

The protein belongs to the tRNA(Ile)-lysidine synthase family.

Its subcellular location is the cytoplasm. The catalysed reaction is cytidine(34) in tRNA(Ile2) + L-lysine + ATP = lysidine(34) in tRNA(Ile2) + AMP + diphosphate + H(+). In terms of biological role, ligates lysine onto the cytidine present at position 34 of the AUA codon-specific tRNA(Ile) that contains the anticodon CAU, in an ATP-dependent manner. Cytidine is converted to lysidine, thus changing the amino acid specificity of the tRNA from methionine to isoleucine. The protein is tRNA(Ile)-lysidine synthase of Streptococcus sanguinis (strain SK36).